The sequence spans 126 residues: MRENKSNPELKIRSTERDYKYISRITGRYAGLSLVFLTAGIVLWTVMDIIFDACIDSWKADPELNNSSYMWNILIYAIPYTLYALAAGFLVTFFSVPNVRINIRKYRDIPAEMSYAPGEHIKGGQE.

2 helical membrane-spanning segments follow: residues 31–54 and 71–98; these read GLSL…FDAC and WNIL…SVPN.

It is found in the cell inner membrane. In Escherichia coli (strain K12), this protein is Protein TrbF (trbF).